The sequence spans 120 residues: Large ribosomal subunit protein bL20c (120 aa).

It belongs to the bacterial ribosomal protein bL20 family.

Its subcellular location is the plastid. Binds directly to 23S ribosomal RNA and is necessary for the in vitro assembly process of the 50S ribosomal subunit. It is not involved in the protein synthesizing functions of that subunit. The sequence is that of Large ribosomal subunit protein bL20c from Cuscuta obtusiflora (Peruvian dodder).